We begin with the raw amino-acid sequence, 258 residues long: Imidazole glycerol phosphate synthase subunit HisF (258 aa).

Active-site residues include D11 and D130.

It belongs to the HisA/HisF family. Heterodimer of HisH and HisF.

The protein resides in the cytoplasm. The catalysed reaction is 5-[(5-phospho-1-deoxy-D-ribulos-1-ylimino)methylamino]-1-(5-phospho-beta-D-ribosyl)imidazole-4-carboxamide + L-glutamine = D-erythro-1-(imidazol-4-yl)glycerol 3-phosphate + 5-amino-1-(5-phospho-beta-D-ribosyl)imidazole-4-carboxamide + L-glutamate + H(+). It participates in amino-acid biosynthesis; L-histidine biosynthesis; L-histidine from 5-phospho-alpha-D-ribose 1-diphosphate: step 5/9. Functionally, IGPS catalyzes the conversion of PRFAR and glutamine to IGP, AICAR and glutamate. The HisF subunit catalyzes the cyclization activity that produces IGP and AICAR from PRFAR using the ammonia provided by the HisH subunit. The sequence is that of Imidazole glycerol phosphate synthase subunit HisF from Rhodospirillum centenum (strain ATCC 51521 / SW).